Here is a 296-residue protein sequence, read N- to C-terminus: 4-diphosphocytidyl-2-C-methyl-D-erythritol kinase (296 aa).

The active site involves Lys11. 95–105 lines the ATP pocket; it reads PVAAGMAGGSS. The active site involves Asp137.

The protein belongs to the GHMP kinase family. IspE subfamily.

The enzyme catalyses 4-CDP-2-C-methyl-D-erythritol + ATP = 4-CDP-2-C-methyl-D-erythritol 2-phosphate + ADP + H(+). The protein operates within isoprenoid biosynthesis; isopentenyl diphosphate biosynthesis via DXP pathway; isopentenyl diphosphate from 1-deoxy-D-xylulose 5-phosphate: step 3/6. In terms of biological role, catalyzes the phosphorylation of the position 2 hydroxy group of 4-diphosphocytidyl-2C-methyl-D-erythritol. In Clostridioides difficile (strain 630) (Peptoclostridium difficile), this protein is 4-diphosphocytidyl-2-C-methyl-D-erythritol kinase.